The sequence spans 369 residues: MSTKELREGFTTGACSAAAAKAATRLLLKGEPVLEIETTLPNDRQVLFPVKRCQLEGEVAICSVVKDAGDDPDCTHGAELTARVRLTKESKIVLKGGDGVATVTKTGLGIEVGEPAINPIPRKNISEMILEELKGSSFNGAEVEISVPGGQEMAKKTMNKRLGLIGGISIIGTTGIVKPFSTAAFKASVIQAIRMAREYEVDTVILTTGGKSEKFAMNLFPNLKELSFIQAGDFIGTGIKTSVKEFIRHVIVVGMIGKLSKMADGVMMTHRGGSSVNTKMLSDIARSVGIPEPIAIDIQNANTARHALEICKENGYEIITTKICEIVARNCSKHAGTNMSISCYMVDFDGTLLGKFENFSQKSKLRKGI.

This sequence belongs to the CbiD family.

The catalysed reaction is Co-precorrin-5B + S-adenosyl-L-methionine = Co-precorrin-6A + S-adenosyl-L-homocysteine. It functions in the pathway cofactor biosynthesis; adenosylcobalamin biosynthesis; cob(II)yrinate a,c-diamide from sirohydrochlorin (anaerobic route): step 6/10. In terms of biological role, catalyzes the methylation of C-1 in cobalt-precorrin-5B to form cobalt-precorrin-6A. This Leptospira borgpetersenii serovar Hardjo-bovis (strain JB197) protein is Cobalt-precorrin-5B C(1)-methyltransferase.